The primary structure comprises 296 residues: tRNA dimethylallyltransferase (296 aa).

2–9 (GPTASGKT) lines the ATP pocket. 4 to 9 (TASGKT) contacts substrate. Interaction with substrate tRNA stretches follow at residues 27 to 30 (DSAL), 151 to 155 (QRLSR), and 232 to 237 (RCVGYR).

This sequence belongs to the IPP transferase family. In terms of assembly, monomer. Mg(2+) serves as cofactor.

It carries out the reaction adenosine(37) in tRNA + dimethylallyl diphosphate = N(6)-dimethylallyladenosine(37) in tRNA + diphosphate. Catalyzes the transfer of a dimethylallyl group onto the adenine at position 37 in tRNAs that read codons beginning with uridine, leading to the formation of N6-(dimethylallyl)adenosine (i(6)A). This chain is tRNA dimethylallyltransferase, found in Shewanella sp. (strain ANA-3).